The following is an 84-amino-acid chain: U4-theraphotoxin-Hhn1a (84 aa).

Positions 1-22 (MKVTLIAILTRAAVLVLHTTAA) are cleaved as a signal peptide. A propeptide spanning residues 23–47 (EELEESQLMEVSMPDTELAAVDEER) is cleaved from the precursor. Intrachain disulfides connect C51/C65, C55/C76, and C70/C81.

This sequence belongs to the neurotoxin 12 (Hwtx-2) family. 02 (Hwtx-2) subfamily. In terms of tissue distribution, expressed by the venom gland.

It localises to the secreted. Its function is as follows. Postsynaptic neurotoxin. The protein is U4-theraphotoxin-Hhn1a of Cyriopagopus hainanus (Chinese bird spider).